Here is a 207-residue protein sequence, read N- to C-terminus: Ion-translocating oxidoreductase complex subunit G (207 aa).

The chain crosses the membrane as a helical span at residues 11–31; that stretch reads GILLGFIALLCTIISAGIYFL. Thr-175 is subject to FMN phosphoryl threonine.

Belongs to the RnfG family. In terms of assembly, the complex is composed of six subunits: RnfA, RnfB, RnfC, RnfD, RnfE and RnfG. It depends on FMN as a cofactor.

The protein resides in the cell inner membrane. Part of a membrane-bound complex that couples electron transfer with translocation of ions across the membrane. This Haemophilus influenzae (strain PittEE) protein is Ion-translocating oxidoreductase complex subunit G.